We begin with the raw amino-acid sequence, 859 residues long: Probable helicase A859L (859 aa).

Residues tyrosine 178–alanine 349 enclose the Helicase ATP-binding domain. ATP is bound at residue methionine 191–threonine 198. The DEAH box motif lies at aspartate 298–histidine 301. Residues histidine 401–serine 553 form the Helicase C-terminal domain.

This sequence belongs to the asfivirus helicase A859L family.

This chain is Probable helicase A859L, found in African swine fever virus (isolate Tick/South Africa/Pretoriuskop Pr4/1996) (ASFV).